The chain runs to 389 residues: Serpin-Z3 (389 aa).

The RCL stretch occupies residues 337–361 (GTEAAAVSVAIMMPQCLMRNPDFVA).

The protein belongs to the serpin family.

In terms of biological role, probable serine protease inhibitor. The protein is Serpin-Z3 of Arabidopsis thaliana (Mouse-ear cress).